Consider the following 200-residue polypeptide: MFNISAVAVSYLIGSLSFAVIVSKYYGMDDPRTYGSGNPGATNVLRSGKKKAAALTLLGDAAKGLVAVLLARVLQEPLGLSDSAIAAVALAALVGHMWPVFFGFKGGKGVATALGVLLALSPATALVCALIWLVMAFGFKVSSLAALTATIAAPLAALFFMPHTSWIWATLLIALLVLFRHKSNIVKLLEGRESKIGGSR.

A run of 5 helical transmembrane segments spans residues 2-22 (FNIS…AVIV), 51-71 (KAAA…VLLA), 84-104 (AIAA…FFGF), 114-134 (LGVL…IWLV), and 159-179 (FFMP…LVLF).

Belongs to the PlsY family. In terms of assembly, probably interacts with PlsX.

The protein localises to the cell inner membrane. The catalysed reaction is an acyl phosphate + sn-glycerol 3-phosphate = a 1-acyl-sn-glycero-3-phosphate + phosphate. Its pathway is lipid metabolism; phospholipid metabolism. Its function is as follows. Catalyzes the transfer of an acyl group from acyl-phosphate (acyl-PO(4)) to glycerol-3-phosphate (G3P) to form lysophosphatidic acid (LPA). This enzyme utilizes acyl-phosphate as fatty acyl donor, but not acyl-CoA or acyl-ACP. The polypeptide is Glycerol-3-phosphate acyltransferase (Neisseria meningitidis serogroup C (strain 053442)).